A 185-amino-acid chain; its full sequence is uncharacterized protein (185 aa).

The next 2 helical transmembrane spans lie at 1-19 and 105-125; these read MLNIVLIIGLLAIFNTSSA and AGFIAQCIIFLFVYTIVTMDV.

The protein localises to the membrane. This is an uncharacterized protein from Caenorhabditis elegans.